The chain runs to 151 residues: UPF0178 protein mma_0312 (151 aa).

The protein belongs to the UPF0178 family.

The polypeptide is UPF0178 protein mma_0312 (Janthinobacterium sp. (strain Marseille) (Minibacterium massiliensis)).